The chain runs to 213 residues: uncharacterized protein (213 aa).

The CS domain occupies 2 to 91; it reads SRHPEVKWAQ…AEAKWWKKLV (90 aa). The interval 168-213 is disordered; the sequence is GMGGMGGMDEFEDESDDEEEVSKPQDAEKAAEAGKSQESDAKAETS. The span at 176-187 shows a compositional bias: acidic residues; it reads DEFEDESDDEEE. The span at 188 to 213 shows a compositional bias: basic and acidic residues; sequence VSKPQDAEKAAEAGKSQESDAKAETS.

Belongs to the p23/wos2 family.

This is an uncharacterized protein from Oryza sativa subsp. japonica (Rice).